A 617-amino-acid chain; its full sequence is Proline--tRNA ligase (617 aa).

Belongs to the class-II aminoacyl-tRNA synthetase family. ProS type 1 subfamily. As to quaternary structure, homodimer.

It is found in the cytoplasm. It carries out the reaction tRNA(Pro) + L-proline + ATP = L-prolyl-tRNA(Pro) + AMP + diphosphate. Its function is as follows. Catalyzes the attachment of proline to tRNA(Pro) in a two-step reaction: proline is first activated by ATP to form Pro-AMP and then transferred to the acceptor end of tRNA(Pro). As ProRS can inadvertently accommodate and process non-cognate amino acids such as alanine and cysteine, to avoid such errors it has two additional distinct editing activities against alanine. One activity is designated as 'pretransfer' editing and involves the tRNA(Pro)-independent hydrolysis of activated Ala-AMP. The other activity is designated 'posttransfer' editing and involves deacylation of mischarged Ala-tRNA(Pro). The misacylated Cys-tRNA(Pro) is not edited by ProRS. The protein is Proline--tRNA ligase of Treponema pallidum (strain Nichols).